We begin with the raw amino-acid sequence, 153 residues long: 3-hydroxyacyl-[acyl-carrier-protein] dehydratase FabZ (153 aa).

H57 is an active-site residue.

This sequence belongs to the thioester dehydratase family. FabZ subfamily.

The protein localises to the cytoplasm. It carries out the reaction a (3R)-hydroxyacyl-[ACP] = a (2E)-enoyl-[ACP] + H2O. In terms of biological role, involved in unsaturated fatty acids biosynthesis. Catalyzes the dehydration of short chain beta-hydroxyacyl-ACPs and long chain saturated and unsaturated beta-hydroxyacyl-ACPs. This Xanthomonas oryzae pv. oryzae (strain MAFF 311018) protein is 3-hydroxyacyl-[acyl-carrier-protein] dehydratase FabZ.